Here is a 1481-residue protein sequence, read N- to C-terminus: Cystic fibrosis transmembrane conductance regulator (1481 aa).

Topologically, residues Met-1–Phe-77 are cytoplasmic. Residues Phe-78–Gln-98 traverse the membrane as a helical segment. The 285-residue stretch at Phe-81–Leu-365 folds into the ABC transmembrane type-1 1 domain. The Extracellular portion of the chain corresponds to Pro-99–Tyr-122. A helical membrane pass occupies residues Leu-123–His-146. Over His-147–Leu-195 the chain is Cytoplasmic. The chain crosses the membrane as a helical span at residues Ala-196 to Trp-216. The Extracellular portion of the chain corresponds to Glu-217–Phe-222. The chain crosses the membrane as a helical span at residues Thr-223–Met-243. At Met-244–Lys-298 the chain is on the cytoplasmic side. Residues Ala-299 to Phe-319 form a helical membrane-spanning segment. Residues Leu-320–Thr-339 are Extracellular-facing. Residues Ile-340–Val-358 traverse the membrane as a helical segment. Residues Gln-359–Ser-858 lie on the Cytoplasmic side of the membrane. ATP is bound by residues Trp-401, Gly-457–Thr-464, and Gln-492. In terms of domain architecture, ABC transporter 1 spans Asn-423 to Gly-645. Cys-523 carries the S-palmitoyl cysteine lipid modification. Phosphoserine is present on Ser-548. The disordered R region stretch occupies residues Thr-653–Asp-831. Ser-659 and Ser-669 each carry phosphoserine; by PKA. A Phosphoserine; by PKC modification is found at Ser-685. A Glycyl lysine isopeptide (Lys-Gly) (interchain with G-Cter in ubiquitin) cross-link involves residue Lys-687. At Ser-699 the chain carries Phosphoserine; by PKA. Phosphoserine is present on Ser-711. A Phosphothreonine modification is found at Thr-716. 2 positions are modified to phosphoserine; by PKA: Ser-736 and Ser-767. Phosphoserine; by PKC is present on Ser-790. 2 positions are modified to phosphoserine; by PKA: Ser-795 and Ser-813. Residues Leu-859–Val-879 form a helical membrane-spanning segment. In terms of domain architecture, ABC transmembrane type-1 2 spans Leu-859 to Ser-1155. At Val-880–Ile-918 the chain is on the extracellular side. N-linked (GlcNAc...) asparagine glycosylation is found at Asn-894 and Asn-900. The chain crosses the membrane as a discontinuously helical span at residues Tyr-919 to His-939. Residues Thr-940–Thr-990 are Cytoplasmic-facing. Residues Ile-991–Leu-1011 form a helical membrane-spanning segment. Over Gln-1012–Pro-1013 the chain is Extracellular. A helical membrane pass occupies residues Tyr-1014–Leu-1034. Topologically, residues His-1035–Thr-1095 are cytoplasmic. The chain crosses the membrane as a helical span at residues Leu-1096–Phe-1116. At Ile-1117–Gly-1130 the chain is on the extracellular side. The helical transmembrane segment at Ile-1131–Ile-1151 threads the bilayer. Over Asp-1152 to Leu-1481 the chain is Cytoplasmic. The 234-residue stretch at Met-1211–Pro-1444 folds into the ABC transporter 2 domain. ATP-binding positions include Tyr-1220 and Gly-1245 to Ser-1252. Positions Arg-1387–Leu-1481 are interaction with GORASP2. The S-palmitoyl cysteine moiety is linked to residue Cys-1396. Positions His-1453–Leu-1481 are disordered. Ser-1457 is subject to Phosphoserine. A compositionally biased stretch (acidic residues) spans Glu-1471 to Leu-1481. Residues Thr-1479–Leu-1481 carry the PDZ-binding motif.

This sequence belongs to the ABC transporter superfamily. ABCC family. CFTR transporter (TC 3.A.1.202) subfamily. Monomer; does not require oligomerization for channel activity. May form oligomers in the membrane. Interacts with SLC26A3, SLC26A6 and NHERF1. Interacts with SHANK2. Interacts with MYO6. Interacts (via C-terminus) with GOPC (via PDZ domain); this promotes CFTR internalization and thereby decreases channel activity. Interacts with SLC4A7 through NHERF1. Found in a complex with MYO5B and RAB11A. Interacts with ANO1. Interacts with SLC26A8. Interacts with AHCYL1; the interaction increases CFTR activity. Interacts with CSE1L. The core-glycosylated form interacts with GORASP2 (via PDZ GRASP-type 1 domain) in respone to ER stress. Interacts with MARCHF2; the interaction leads to CFTR ubiqtuitination and degradation. Interacts with ADGRG2. N-glycosylated. Post-translationally, phosphorylated; cAMP treatment promotes phosphorylation and activates the channel. Dephosphorylation decreases the ATPase activity (in vitro). Phosphorylation at PKA sites activates the channel. Phosphorylation at PKC sites enhances the response to phosphorylation by PKA. Phosphorylated by AMPK; this inhibits channel activity. In terms of processing, ubiquitinated, leading to its degradation in the lysosome. Deubiquitination by USP10 in early endosomes enhances its endocytic recycling to the cell membrane. Ubiquitinated by RNF185 during ER stress. Ubiquitinated by MARCHF2.

It localises to the apical cell membrane. Its subcellular location is the early endosome membrane. It is found in the cell membrane. The protein resides in the recycling endosome membrane. The protein localises to the endoplasmic reticulum membrane. It localises to the nucleus. The enzyme catalyses ATP + H2O + closed Cl(-) channel = ADP + phosphate + open Cl(-) channel.. It catalyses the reaction chloride(in) = chloride(out). The catalysed reaction is hydrogencarbonate(in) = hydrogencarbonate(out). It carries out the reaction ATP + H2O = ADP + phosphate + H(+). Epithelial ion channel that plays an important role in the regulation of epithelial ion and water transport and fluid homeostasis. Mediates the transport of chloride ions across the cell membrane. Possesses an intrinsic ATPase activity and utilizes ATP to gate its channel; the passive flow of anions through the channel is gated by cycles of ATP binding and hydrolysis by the ATP-binding domains. The ion channel is also permeable to HCO(3)(-); selectivity depends on the extracellular chloride concentration. Exerts its function also by modulating the activity of other ion channels and transporters. Contributes to the regulation of the pH and the ion content of the epithelial fluid layer. Modulates the activity of the epithelial sodium channel (ENaC) complex, in part by regulating the cell surface expression of the ENaC complex. May regulate bicarbonate secretion and salvage in epithelial cells by regulating the transporter SLC4A7. Can inhibit the chloride channel activity of ANO1. Plays a role in the chloride and bicarbonate homeostasis during sperm epididymal maturation and capacitation. This Bos taurus (Bovine) protein is Cystic fibrosis transmembrane conductance regulator.